We begin with the raw amino-acid sequence, 220 residues long: HTH-type transcriptional repressor GlaR (220 aa).

Residues 1 to 69 enclose the HTH gntR-type domain; the sequence is MTITSLDGYR…NQKGYRVASM (69 aa). A DNA-binding region (H-T-H motif) is located at residues 29–48; that stretch reads MSLLTSRYALGVGPLREALS.

It localises to the cytoplasm. The repressive effect at the glaH promoter site is specifically relieved upon glutarate binding. Negatively regulates the expression of the glaH-lhgD-gabDTP operon in a temporal manner during entry into stationary phase or during the first few hours of carbon starvation. Thereby is involved in the regulation of a L-lysine degradation pathway that proceeds via cadaverine, glutarate and L-2-hydroxyglutarate. Binds to two primary and two secondary sites in the promoter region of the glaH operon with the consensus sequences TTGTN5TTTT and ATGTN5TTTT of the primary sites, each separated by six nucleotides. The chain is HTH-type transcriptional repressor GlaR from Escherichia coli (strain K12).